A 313-amino-acid polypeptide reads, in one-letter code: Olfactory receptor 8B2 (313 aa).

Topologically, residues 1–25 (MLARNNSLVTEFILAGLTDHPEFRQ) are extracellular. Asn5 carries an N-linked (GlcNAc...) asparagine glycan. The helical transmembrane segment at 26-46 (PLFFLFLVIYIVTMVGNLGLI) threads the bilayer. The Cytoplasmic portion of the chain corresponds to 47-54 (TLFGLNSH). A helical transmembrane segment spans residues 55 to 75 (LHTPMYYFLFNLSFIDLCYSS). The Extracellular portion of the chain corresponds to 76–99 (VFTPKMLMNFVSKKNIISNVGCMT). Residues Cys97 and Cys189 are joined by a disulfide bond. The helical transmembrane segment at 100–120 (RLFFFLFFVISECYMLTSMAY) threads the bilayer. Residues 121–139 (DRYVAICNPLLYKVTMSHQ) lie on the Cytoplasmic side of the membrane. A helical membrane pass occupies residues 140–160 (VCSMLTFAAYIMGLAGATAHT). The Extracellular portion of the chain corresponds to 161 to 197 (GCMLRLTFCSANIINHYLCDILPLLQLSCTSTYVNEV). A helical membrane pass occupies residues 198–217 (VVLIVVGTNITVPSCTILIS). The Cytoplasmic segment spans residues 218–237 (YVFIVTSILHIKSTQGRSKA). A helical membrane pass occupies residues 238 to 258 (FSTCSSHVIALSLFFGSAAFM). At 259–270 (YIKYSSGSMEQG) the chain is on the extracellular side. Residues 271–291 (KVSSVFYTNVVPMLNPLIYSL) form a helical membrane-spanning segment. At 292–313 (RNKDVKVALRKALIKIQRRNIF) the chain is on the cytoplasmic side.

Belongs to the G-protein coupled receptor 1 family.

It is found in the cell membrane. Its function is as follows. Odorant receptor. The sequence is that of Olfactory receptor 8B2 (OR8B2) from Homo sapiens (Human).